The following is a 390-amino-acid chain: Nuclear receptor subfamily 2 group F member 6 (390 aa).

Positions 1–15 are enriched in gly residues; it reads MAMVTGGWGDPGGDT. A disordered region spans residues 1 to 50; the sequence is MAMVTGGWGDPGGDTNGVDKAGGSYPRATEDDSASPPGATSDAEPGDEER. A phosphoserine mark is found at S35 and S41. The segment at residues 54-129 is a DNA-binding region (nuclear receptor); the sequence is QVDCVVCGDK…VGMRKEAVQR (76 aa). The segment at 57 to 77 adopts an NR C4-type zinc-finger fold; sequence CVVCGDKSSGKHYGVFTCEGC. S84 carries the post-translational modification Phosphoserine. An NR C4-type zinc finger spans residues 93-117; the sequence is CRSNRDCQIDQHHRNQCQYCRLKKC. Residues 157–380 enclose the NR LBD domain; sequence PVSELIAQLL…TLIRDMLLSG (224 aa). The tract at residues 314 to 390 is important for dimerization; the sequence is LQEKAQVALT…STFNWPYGSG (77 aa).

Belongs to the nuclear hormone receptor family. NR2 subfamily. Binds DNA as dimer; homodimer and heterodimer with NR2F2 and probably NR2F1. Interacts with THRB.

The protein resides in the nucleus. In terms of biological role, transcription factor predominantly involved in transcriptional repression. Binds to promoter/enhancer response elements that contain the imperfect 5'-AGGTCA-3' direct or inverted repeats with various spacings which are also recognized by other nuclear hormone receptors. Involved in modulation of hormonal responses. Represses transcriptional activity of the lutropin-choriogonadotropic hormone receptor/LHCGR gene, the renin/REN gene and the oxytocin-neurophysin/OXT gene. Represses the triiodothyronine-dependent and -independent transcriptional activity of the thyroid hormone receptor gene in a cell type-specific manner. The corepressing function towards thyroid hormone receptor beta/THRB involves at least in part the inhibition of THRB binding to triiodothyronine response elements (TREs) by NR2F6. Inhibits NFATC transcription factor DNA binding and subsequently its transcriptional activity. Acts as transcriptional repressor of IL-17 expression in Th-17 differentiated CD4(+) T cells and may be involved in induction and/or maintenance of peripheral immunological tolerance and autoimmunity. Involved in development of forebrain circadian clock; is required early in the development of the locus coeruleus (LC). The sequence is that of Nuclear receptor subfamily 2 group F member 6 (Nr2f6) from Mus musculus (Mouse).